The sequence spans 255 residues: Aliphatic sulfonates import ATP-binding protein SsuB (255 aa).

In terms of domain architecture, ABC transporter spans 12–233; that stretch reads LLLNAVSKHY…RLGSVRLAEL (222 aa). Position 44–51 (44–51) interacts with ATP; the sequence is GRSGGGKS.

It belongs to the ABC transporter superfamily. Aliphatic sulfonates importer (TC 3.A.1.17.2) family. The complex is composed of two ATP-binding proteins (SsuB), two transmembrane proteins (SsuC) and a solute-binding protein (SsuA).

The protein localises to the cell inner membrane. It catalyses the reaction ATP + H2O + aliphatic sulfonate-[sulfonate-binding protein]Side 1 = ADP + phosphate + aliphatic sulfonateSide 2 + [sulfonate-binding protein]Side 1.. Its function is as follows. Part of the ABC transporter complex SsuABC involved in aliphatic sulfonates import. Responsible for energy coupling to the transport system. The polypeptide is Aliphatic sulfonates import ATP-binding protein SsuB (Shigella flexneri).